A 174-amino-acid polypeptide reads, in one-letter code: Large ribosomal subunit protein uL6 (174 aa).

Belongs to the universal ribosomal protein uL6 family. In terms of assembly, part of the 50S ribosomal subunit.

Functionally, this protein binds to the 23S rRNA, and is important in its secondary structure. It is located near the subunit interface in the base of the L7/L12 stalk, and near the tRNA binding site of the peptidyltransferase center. This is Large ribosomal subunit protein uL6 from Stenotrophomonas maltophilia (strain R551-3).